Reading from the N-terminus, the 102-residue chain is Protamine-2 (102 aa).

A disordered region spans residues 1 to 102 (MVRCRVRSPS…RTRRRTCRRH (102 aa)). Ser8, Ser10, and Ser37 each carry phosphoserine. Residues 8-17 (SPSERSHEVY) show a composition bias toward basic and acidic residues. The span at 39-48 (EHVEVYERTH) shows a compositional bias: basic and acidic residues. Residues 49–102 (GHSHYRRRHCSRRRLRRIHRQQHRSCRRRKRRSCRHRRRHRKGCRTRRRTCRRH) show a composition bias toward basic residues.

The protein belongs to the protamine P2 family. In terms of assembly, interacts with TDRP. Post-translationally, proteolytic processing into mature chains is required for histone eviction during spermatogenesis. Transition proteins (TNP1 and TNP2) are required for processing. In terms of tissue distribution, testis.

Its subcellular location is the nucleus. It is found in the chromosome. Functionally, protamines substitute for histones in the chromatin of sperm during the haploid phase of spermatogenesis. They compact sperm DNA into a highly condensed, stable and inactive complex. This is Protamine-2 (PRM2) from Gorilla gorilla gorilla (Western lowland gorilla).